A 418-amino-acid chain; its full sequence is Putative ion-transport protein YfeO (418 aa).

Transmembrane regions (helical) follow at residues 10 to 30 (LLLS…LIVV), 54 to 74 (DSPF…GLVI), 99 to 119 (ALPG…SLGP), 120 to 140 (EHPI…RLLP), 149 to 169 (ILAS…AALI), 186 to 206 (LFAP…FFHP), 223 to 243 (ILSG…AVWC), 258 to 278 (VLML…AGPV), 300 to 320 (DYFL…ASGF), 322 to 342 (GGRI…LHEH), 343 to 363 (VPAV…VLVV), and 371 to 391 (LFMA…CIVM).

This sequence belongs to the chloride channel (TC 2.A.49) family.

Its subcellular location is the cell membrane. This is Putative ion-transport protein YfeO from Escherichia coli O7:K1 (strain IAI39 / ExPEC).